The primary structure comprises 519 residues: AarF domain-containing protein kinase 1 (519 aa).

The region spanning 145–481 (SFEDTPLGAA…SLYRRVHISL (337 aa)) is the Protein kinase domain. Residues 151–159 (LGAASLAQV) and Lys-173 each bind ATP. Residue Asp-305 is the Proton acceptor of the active site.

This sequence belongs to the protein kinase superfamily. ADCK protein kinase family.

It localises to the mitochondrion. Appears to be essential for maintaining mitochondrial cristae formation and mitochondrial function by acting via YME1L1 in a kinase-independent manner to regulate essential mitochondrial structural proteins OPA1 and IMMT. The action of this enzyme is not yet clear. It is not known if it has protein kinase activity and what type of substrate it would phosphorylate (Ser, Thr or Tyr). The polypeptide is AarF domain-containing protein kinase 1 (ADCK1) (Gallus gallus (Chicken)).